The primary structure comprises 511 residues: Phospho-2-dehydro-3-deoxyheptonate aldolase 1, chloroplastic (511 aa).

Residues 1-49 (MALSNTLSLSSSKSLVQSHLLHNPTPQPRFSLFPTTQHGRRHPISAVHA) constitute a chloroplast transit peptide.

Belongs to the class-II DAHP synthase family. Higher levels seen in the cotyledons than in the leaves and flowers. Lower levels seen in the roots and stems.

The protein localises to the plastid. The protein resides in the chloroplast. It catalyses the reaction D-erythrose 4-phosphate + phosphoenolpyruvate + H2O = 7-phospho-2-dehydro-3-deoxy-D-arabino-heptonate + phosphate. Its pathway is metabolic intermediate biosynthesis; chorismate biosynthesis; chorismate from D-erythrose 4-phosphate and phosphoenolpyruvate: step 1/7. Functionally, may be involved in the synthesis of secondary metabolites derived from intermediates of the pre-chorismate pathway up to shikimate. This is Phospho-2-dehydro-3-deoxyheptonate aldolase 1, chloroplastic from Solanum lycopersicum (Tomato).